A 156-amino-acid chain; its full sequence is V-type proton ATPase 16 kDa proteolipid subunit c (156 aa).

The Lumenal portion of the chain corresponds to 1–7 (MAENPIY). A helical transmembrane segment spans residues 8-30 (GPFFGVMGAASAIIFSALGAAYG). At 31 to 52 (TAKSGTGIAAMSVMRPELIMKS) the chain is on the cytoplasmic side. The chain crosses the membrane as a helical span at residues 53–73 (IIPVVMAGIIAIYGLVVAVLI). Over 74–92 (AGSLDAPSNNYTLYKGFIH) the chain is Lumenal. The helical transmembrane segment at 93–114 (LGAGLAVGFSGLAAGFAIGIVG) threads the bilayer. Over 115 to 126 (DAGVRGTAQQPR) the chain is Cytoplasmic. The chain crosses the membrane as a helical span at residues 127–152 (LFVGMILILIFAEVLGLYGLIVAIYL). At 153–156 (YTKQ) the chain is on the lumenal side.

Belongs to the V-ATPase proteolipid subunit family. In terms of assembly, V-ATPase is a heteromultimeric enzyme made up of two complexes: the ATP-hydrolytic V1 complex and the proton translocation V0 complex. The V1 complex consists of three catalytic AB heterodimers that form a heterohexamer, three peripheral stalks each consisting of EG heterodimers, one central rotor including subunits D and F, and the regulatory subunits C and H. The proton translocation complex V0 consists of the proton transport subunit a, a ring of proteolipid subunits c9c'', rotary subunit d, subunits e and f, and the accessory subunits VhaAC45 and ATP6AP2.

Its subcellular location is the membrane. Functionally, proton-conducting pore forming subunit of the V0 complex of vacuolar(H+)-ATPase (V-ATPase), a multisubunit enzyme composed of a peripheral complex (V1) that hydrolyzes ATP and a membrane integral complex (V0) that translocates protons. V-ATPase is responsible for acidifying and maintaining the pH of intracellular compartments and in some cell types, is targeted to the plasma membrane, where it is responsible for acidifying the extracellular environment. This is V-type proton ATPase 16 kDa proteolipid subunit c (VHA16) from Heliothis virescens (Tobacco budworm moth).